Here is a 145-residue protein sequence, read N- to C-terminus: Large ribosomal subunit protein uL11 (145 aa).

Belongs to the universal ribosomal protein uL11 family. Part of the ribosomal stalk of the 50S ribosomal subunit. Interacts with L10 and the large rRNA to form the base of the stalk. L10 forms an elongated spine to which L12 dimers bind in a sequential fashion forming a multimeric L10(L12)X complex. In terms of processing, one or more lysine residues are methylated.

In terms of biological role, forms part of the ribosomal stalk which helps the ribosome interact with GTP-bound translation factors. The sequence is that of Large ribosomal subunit protein uL11 from Persephonella marina (strain DSM 14350 / EX-H1).